A 126-amino-acid polypeptide reads, in one-letter code: Large ribosomal subunit protein bL12 (126 aa).

Belongs to the bacterial ribosomal protein bL12 family. Homodimer. Part of the ribosomal stalk of the 50S ribosomal subunit. Forms a multimeric L10(L12)X complex, where L10 forms an elongated spine to which 2 to 4 L12 dimers bind in a sequential fashion. Binds GTP-bound translation factors.

Forms part of the ribosomal stalk which helps the ribosome interact with GTP-bound translation factors. Is thus essential for accurate translation. This chain is Large ribosomal subunit protein bL12, found in Acidovorax ebreus (strain TPSY) (Diaphorobacter sp. (strain TPSY)).